Here is a 600-residue protein sequence, read N- to C-terminus: Kelch-like protein 24 (600 aa).

The 68-residue stretch at 66–133 (TDVIICVEGK…VYTGKVKITT (68 aa)) folds into the BTB domain. Residues 168-270 (CLGIQRFADT…HPNYFVQTVE (103 aa)) form the BACK domain. Kelch repeat units follow at residues 314-363 (VIVV…ALRN), 365-407 (ILVS…VLLG), 408-454 (KVYV…SCVG), 456-502 (LFVI…SLNN), 504-544 (IYVA…VCNG), and 546-592 (IYIL…TIHR).

Forms homodimers. Interacts with GRIK2. Component of the BCR(KLHL24) E3 ubiquitin ligase complex, composed of CUL3, RBX1 and KLHL24. Interacts with CUL3. Interacts with KRT14. Autoubiquitinated. Autoubiquitination leads to proteasomal degradation and is necessary to control KLHL24 levels. As to expression, expressed in the skin. Found in keratinocytes, dermal fibroblasts, and melanocytes. Basal-layer keratinocytes have lower KLHL24 expression than suprabasal keratinocytes. Expressed in the brain, spinal cord, liver, testis, heart and at higher levels in the skeletal muscle.

It is found in the perikaryon. It localises to the cell projection. Its subcellular location is the axon. The protein localises to the cytoplasm. The protein resides in the cell junction. It is found in the desmosome. It localises to the adherens junction. Its function is as follows. Necessary to maintain the balance between intermediate filament stability and degradation, a process that is essential for skin integrity. As part of the BCR(KLHL24) E3 ubiquitin ligase complex, mediates ubiquitination of KRT14 and controls its levels during keratinocytes differentiation. Specifically reduces kainate receptor-mediated currents in hippocampal neurons, most probably by modulating channel properties. Has a crucial role in cardiac development and function. This Homo sapiens (Human) protein is Kelch-like protein 24 (KLHL24).